A 434-amino-acid chain; its full sequence is RNA polymerase II holoenzyme cyclin-like subunit (434 aa).

The 133-residue stretch at 23–155 folds into the Cyclin N-terminal domain; that stretch reads EARRRVLLLE…LIEEMDSYLL (133 aa). Residues 248–278 show a composition bias toward low complexity; the sequence is GSSTNPININNNNNTNTSNNNGTTSTTTTTT. Disordered stretches follow at residues 248-292, 301-320, and 330-362; these read GSST…DNTE, LTKSSNNSQDKSDDKMDIDN, and QIQNQTQHQHQESTHNNTSSTNTGRNGINGQIS. Residues 330-359 show a composition bias toward low complexity; that stretch reads QIQNQTQHQHQESTHNNTSSTNTGRNGING.

This sequence belongs to the cyclin family. Cyclin C subfamily. In terms of assembly, component of the SRB8-11 complex, a regulatory module of the Mediator complex.

The protein resides in the nucleus. In terms of biological role, component of the SRB8-11 complex. The SRB8-11 complex is a regulatory module of the Mediator complex which is itself involved in regulation of basal and activated RNA polymerase II-dependent transcription. The SRB8-11 complex may be involved in the transcriptional repression of a subset of genes regulated by Mediator. It may inhibit the association of the Mediator complex with RNA polymerase II to form the holoenzyme complex. The SRB8-11 complex phosphorylates the C-terminal domain (CTD) of the largest subunit of RNA polymerase II. In Candida albicans (strain SC5314 / ATCC MYA-2876) (Yeast), this protein is RNA polymerase II holoenzyme cyclin-like subunit (SSN8).